A 398-amino-acid chain; its full sequence is 1-deoxy-D-xylulose 5-phosphate reductoisomerase (398 aa).

Thr11, Gly12, Ser13, Ile14, and Asn125 together coordinate NADPH. Lys126 lines the 1-deoxy-D-xylulose 5-phosphate pocket. NADPH is bound at residue Glu127. A Mn(2+)-binding site is contributed by Asp151. Residues Ser152, Glu153, Ser186, and His209 each coordinate 1-deoxy-D-xylulose 5-phosphate. Glu153 is a binding site for Mn(2+). An NADPH-binding site is contributed by Gly215. 1-deoxy-D-xylulose 5-phosphate contacts are provided by Ser222, Asn227, Lys228, and Glu231. Position 231 (Glu231) interacts with Mn(2+).

Belongs to the DXR family. Mg(2+) serves as cofactor. Requires Mn(2+) as cofactor.

The catalysed reaction is 2-C-methyl-D-erythritol 4-phosphate + NADP(+) = 1-deoxy-D-xylulose 5-phosphate + NADPH + H(+). It functions in the pathway isoprenoid biosynthesis; isopentenyl diphosphate biosynthesis via DXP pathway; isopentenyl diphosphate from 1-deoxy-D-xylulose 5-phosphate: step 1/6. Catalyzes the NADPH-dependent rearrangement and reduction of 1-deoxy-D-xylulose-5-phosphate (DXP) to 2-C-methyl-D-erythritol 4-phosphate (MEP). This is 1-deoxy-D-xylulose 5-phosphate reductoisomerase from Acinetobacter baylyi (strain ATCC 33305 / BD413 / ADP1).